Reading from the N-terminus, the 1132-residue chain is Telomerase reverse transcriptase (1132 aa).

The segment at 1–66 (MSAKKPVQSK…NQNNANSGGN (66 aa)) is disordered. Polar residues-rich tracts occupy residues 9-26 (SKLN…NRST) and 45-55 (QSQNTTTGAFR). The Reverse transcriptase domain occupies 602-956 (KEMRIFCESQ…DLFHWIGISI (355 aa)). Mg(2+)-binding residues include aspartate 708, aspartate 886, and aspartate 887.

The protein belongs to the reverse transcriptase family. Telomerase subfamily.

The protein resides in the nucleus. It is found in the chromosome. The protein localises to the telomere. It carries out the reaction DNA(n) + a 2'-deoxyribonucleoside 5'-triphosphate = DNA(n+1) + diphosphate. In terms of biological role, telomerase is a ribonucleoprotein enzyme essential for the replication of chromosome termini in most eukaryotes. It elongates telomeres. It is a reverse transcriptase that adds simple sequence repeats to chromosome ends by copying a template sequence within the RNA component of the enzyme. In Oxytricha trifallax (Sterkiella histriomuscorum), this protein is Telomerase reverse transcriptase (TERT).